A 168-amino-acid polypeptide reads, in one-letter code: Ecotin (168 aa).

The signal sequence occupies residues 1-21 (MKRLSIAITSLLMAASASTIA). C76 and C113 form a disulfide bridge.

Belongs to the protease inhibitor I11 (ecotin) family. As to quaternary structure, homodimer.

The protein localises to the periplasm. Its function is as follows. General inhibitor of pancreatic serine proteases: inhibits chymotrypsin, trypsin, elastases, factor X, kallikrein as well as a variety of other proteases. The protein is Ecotin of Yersinia enterocolitica serotype O:8 / biotype 1B (strain NCTC 13174 / 8081).